We begin with the raw amino-acid sequence, 336 residues long: Probable long-chain-alcohol O-fatty-acyltransferase 8 (336 aa).

A run of 8 helical transmembrane segments spans residues 7-27 (SFVK…YIPS), 38-58 (SVLP…FTIF), 59-79 (SSTT…LFAF), 82-102 (GPLL…CLPI), 117-135 (WVFF…VHNY), 152-172 (LYLV…IILG), 228-248 (MGCW…YFYI), and 284-304 (PMLS…FLFF).

The protein belongs to the wax synthase family.

The protein localises to the membrane. It catalyses the reaction a long chain fatty alcohol + a fatty acyl-CoA = a wax ester + CoA. Catalyzes the final step in the synthesis of long-chain linear esters (waxes). The polypeptide is Probable long-chain-alcohol O-fatty-acyltransferase 8 (Arabidopsis thaliana (Mouse-ear cress)).